A 740-amino-acid chain; its full sequence is Arf-GAP with coiled-coil, ANK repeat and PH domain-containing protein 1 (740 aa).

Residues 1-226 (MTVKLDFEEC…RKELGTQLHN (226 aa)) form the BAR domain. The interval 1–382 (MTVKLDFEEC…RGPGQVSGYH (382 aa)) is required for formation of endosomal tubules when overexpressed with PIP5K1C. A PH domain is found at 265–360 (GLVMEGHLFK…WVSAVQSSIA (96 aa)). Residues 405 to 527 (GQVAAQVQSV…KFLTKLPEIR (123 aa)) form the Arf-GAP domain. A required for interaction with GULP1 region spans residues 405 to 740 (GQVAAQVQSV…SRRSHDLHTL (336 aa)). The C4-type zinc finger occupies 420 to 443 (CCDCREPAPEWASINLGVTLCIQC). Residue Tyr-485 is modified to 3'-nitrotyrosine. Positions 525–562 (EIRGRRGGRGPPRGHPPVPPKPPIRPHSGIVRSKSECP) are disordered. The segment at 525-566 (EIRGRRGGRGPPRGHPPVPPKPPIRPHSGIVRSKSECPSDDM) is prevents interaction with ITGB1 when S-554 is not phosphorylated. Residues 537–549 (RGHPPVPPKPPIR) are compositionally biased toward pro residues. ANK repeat units lie at residues 606–635 (GNAT…NVNQ), 639–668 (AGRG…DLGA), and 672–702 (EGRD…EAEA).

Banana-shaped homodimer laterally assembling into tetramers, the tetramers further pack helically onto the membrane. Interacts with GTP-bound ARF6. Interacts with third cytoplasmic loop of SLC2A4/GLUT4. Interacts with CLTC. Interacts with GULP1. Forms a complex with GDP-bound ARF6 and GULP1. Interacts with ITGB1; required for ITGB1 recycling.

The protein resides in the recycling endosome membrane. With respect to regulation, GAP activity stimulated by phosphatidylinositol 4,5-bisphosphate (PIP2) and phosphatidic acid. In terms of biological role, GTPase-activating protein (GAP) for ADP ribosylation factor 6 (ARF6) required for clathrin-dependent export of proteins from recycling endosomes to trans-Golgi network and cell surface. Required for regulated export of ITGB1 from recycling endosomes to the cell surface and ITGB1-dependent cell migration. This Mus musculus (Mouse) protein is Arf-GAP with coiled-coil, ANK repeat and PH domain-containing protein 1 (Acap1).